The sequence spans 101 residues: Small ribosomal subunit protein bS18c (101 aa).

A compositionally biased stretch (basic residues) spans 1-19; sequence MNKSKRPFTKSKRSFRRRL. The tract at residues 1–23 is disordered; the sequence is MNKSKRPFTKSKRSFRRRLPPIQ.

The protein belongs to the bacterial ribosomal protein bS18 family. In terms of assembly, part of the 30S ribosomal subunit.

The protein localises to the plastid. Its subcellular location is the chloroplast. In Lobularia maritima (Sweet alyssum), this protein is Small ribosomal subunit protein bS18c.